A 259-amino-acid polypeptide reads, in one-letter code: Thiazole synthase (259 aa).

Catalysis depends on Lys-100, which acts as the Schiff-base intermediate with DXP. 1-deoxy-D-xylulose 5-phosphate is bound by residues Gly-161, 187 to 188 (AG), and 209 to 210 (NT).

The protein belongs to the ThiG family. As to quaternary structure, homotetramer. Forms heterodimers with either ThiH or ThiS.

It is found in the cytoplasm. The catalysed reaction is [ThiS sulfur-carrier protein]-C-terminal-Gly-aminoethanethioate + 2-iminoacetate + 1-deoxy-D-xylulose 5-phosphate = [ThiS sulfur-carrier protein]-C-terminal Gly-Gly + 2-[(2R,5Z)-2-carboxy-4-methylthiazol-5(2H)-ylidene]ethyl phosphate + 2 H2O + H(+). It functions in the pathway cofactor biosynthesis; thiamine diphosphate biosynthesis. Functionally, catalyzes the rearrangement of 1-deoxy-D-xylulose 5-phosphate (DXP) to produce the thiazole phosphate moiety of thiamine. Sulfur is provided by the thiocarboxylate moiety of the carrier protein ThiS. In vitro, sulfur can be provided by H(2)S. This Methylobacillus flagellatus (strain ATCC 51484 / DSM 6875 / VKM B-1610 / KT) protein is Thiazole synthase.